Reading from the N-terminus, the 292-residue chain is Protein LRATD1 (292 aa).

A Phosphoserine modification is found at Ser38. Residues 133–228 (PAPEPPAPAP…CRFGKREFKA (96 aa)) form the LRAT domain.

The protein belongs to the LRATD family. As to expression, only detected in testis. Highly expressed in colon cancer cells.

It is found in the cytoplasm. May play a role in cell morphology and motility. The chain is Protein LRATD1 from Homo sapiens (Human).